We begin with the raw amino-acid sequence, 495 residues long: UPF0371 protein CE2832 (495 aa).

This sequence belongs to the UPF0371 family.

In Corynebacterium efficiens (strain DSM 44549 / YS-314 / AJ 12310 / JCM 11189 / NBRC 100395), this protein is UPF0371 protein CE2832.